The primary structure comprises 239 residues: Transcriptional activatory protein AadR (239 aa).

An a nucleoside 3',5'-cyclic phosphate-binding site is contributed by 27-149; it reads ICGELGPADH…FATRELSLAQ (123 aa). The HTH crp-type domain occupies 158 to 231; the sequence is RSAEEKVAAF…PDGVRVLDPK (74 aa). Positions 191 to 210 form a DNA-binding region, H-T-H motif; the sequence is RQDIADFLGLTIETVSRTFT.

Functionally, transcriptional activator of anaerobic gene expression. For aromatic acid degradation. Also required for the anaerobic degradation of benzoate. The chain is Transcriptional activatory protein AadR (aadR) from Rhodopseudomonas palustris (strain ATCC BAA-98 / CGA009).